Here is a 440-residue protein sequence, read N- to C-terminus: Glycerophosphocholine cholinephosphodiesterase ENPP6 (440 aa).

The N-terminal stretch at 1–22 (MAVKLGTLLLALALGLAQPASA) is a signal peptide. Positions 32, 71, and 92 each coordinate substrate. Residues D32 and S71 each contribute to the Zn(2+) site. Catalysis depends on S71, which acts as the Nucleophile. S71 bears the Phosphoserine mark. N-linked (GlcNAc...) asparagine glycosylation is found at N100 and N118. Residues C142 and C154 are joined by a disulfide bond. D193 is a substrate binding site. The Zn(2+) site is built by D193, H197, D240, and H241. H241 lines the substrate pocket. N-linked (GlcNAc...) asparagine glycosylation occurs at N341. H354 is a binding site for substrate. H354 lines the Zn(2+) pocket. N-linked (GlcNAc...) asparagine glycosylation occurs at N404. A lipid anchor (GPI-anchor amidated serine) is attached at S419. Positions 420–440 (TAPPVWPSHCALALILLFLLA) are cleaved as a propeptide — removed in mature form.

This sequence belongs to the nucleotide pyrophosphatase/phosphodiesterase family. In terms of assembly, homodimer; disulfide-linked. Homotetramer. It depends on Zn(2+) as a cofactor. As to expression, predominantly expressed in kidney and brain. In the kidney, expressed specifically in the proximal tubules and thin descending limbs of Henle (at protein level).

The protein localises to the cell membrane. The enzyme catalyses sn-glycerol 3-phosphocholine + H2O = phosphocholine + glycerol + H(+). It catalyses the reaction a 1-acyl-sn-glycero-3-phosphocholine + H2O = a 1-acyl-sn-glycerol + phosphocholine + H(+). It carries out the reaction a 1-O-alkyl-sn-glycero-3-phosphocholine + H2O = a 1-O-alkyl-sn-glycerol + phosphocholine + H(+). The catalysed reaction is 1-dodecanoyl-sn-glycero-3-phosphocholine + H2O = 1-dodecanoyl-sn-glycerol + phosphocholine + H(+). The enzyme catalyses 1-hexadecanoyl-sn-glycero-3-phosphocholine + H2O = 1-hexadecanoyl-sn-glycerol + phosphocholine + H(+). It catalyses the reaction 1-(5Z,8Z,11Z,14Z-eicosatetraenoyl)-sn-glycero-3-phosphocholine + H2O = 1-(5Z,8Z,11Z,14Z-eicosatetraenoyl)-sn-glycerol + phosphocholine + H(+). It carries out the reaction 1-tetradecanoyl-sn-glycero-3-phosphocholine + H2O = 1-tetradecanoyl-sn-glycerol + phosphocholine + H(+). The catalysed reaction is sphing-4-enine-phosphocholine + H2O = sphing-4-enine + phosphocholine + H(+). The enzyme catalyses 1-(9Z-octadecenoyl)-sn-glycero-3-phosphocholine + H2O = 1-(9Z-octadecenoyl)-sn-glycerol + phosphocholine + H(+). It catalyses the reaction 1-(9Z,12Z)-octadecadienoyl-sn-glycero-3-phosphocholine + H2O = 1-(9Z,12Z-octadecadienoyl)-sn-glycerol + phosphocholine + H(+). It carries out the reaction glycero-2-phosphocholine + H2O = phosphocholine + glycerol + H(+). With respect to regulation, inhibited by EDTA and EGTA in vitro. Functionally, choline-specific glycerophosphodiesterase that hydrolyzes glycerophosphocholine (GPC) and lysophosphatidylcholine (LPC) and contributes to supplying choline to the cells. Has a preference for LPC with short (12:0 and 14:0) or polyunsaturated (18:2 and 20:4) fatty acids. In vitro, hydrolyzes only choline-containing lysophospholipids, such as sphingosylphosphorylcholine (SPC), platelet-activating factor (PAF) and lysoPAF, but not other lysophospholipids. The chain is Glycerophosphocholine cholinephosphodiesterase ENPP6 from Homo sapiens (Human).